A 201-amino-acid polypeptide reads, in one-letter code: MANILFIDNFDSFTYNLVDQFRSLGHVVTIYRNNLSADAIEQALLQLDNPVVVLSPGPGAPSETGCMPELLQRLKGKVPMIGICLGHQAIVEAYGGVVAGAGEIIHGKVSMMEHQNHAIYRGLPSPLAIARYHSLVATQVPSALTVTAEVNGLVMSVVNEADKVCGFQFHPESIMTTHGATLLANAIDWALSSTPAQTQFA.

The Glutamine amidotransferase type-1 domain maps to 3-196 (NILFIDNFDS…IDWALSSTPA (194 aa)). 57–59 (GPG) provides a ligand contact to L-glutamine. The active-site Nucleophile; for GATase activity is Cys84. L-glutamine contacts are provided by residues Gln88 and 134-135 (SL). Catalysis depends on for GATase activity residues His170 and Glu172.

Heterotetramer consisting of two non-identical subunits: a beta subunit (TrpG) and a large alpha subunit (TrpE).

The catalysed reaction is chorismate + L-glutamine = anthranilate + pyruvate + L-glutamate + H(+). Its pathway is amino-acid biosynthesis; L-tryptophan biosynthesis; L-tryptophan from chorismate: step 1/5. In terms of biological role, part of a heterotetrameric complex that catalyzes the two-step biosynthesis of anthranilate, an intermediate in the biosynthesis of L-tryptophan. In the first step, the glutamine-binding beta subunit (TrpG) of anthranilate synthase (AS) provides the glutamine amidotransferase activity which generates ammonia as a substrate that, along with chorismate, is used in the second step, catalyzed by the large alpha subunit of AS (TrpE) to produce anthranilate. In the absence of TrpG, TrpE can synthesize anthranilate directly from chorismate and high concentrations of ammonia. This chain is Anthranilate synthase component 2 (trpG), found in Vibrio cholerae serotype O1 (strain ATCC 39315 / El Tor Inaba N16961).